The following is a 368-amino-acid chain: Cell division protein FtsZ 1 (368 aa).

Residues 52 to 56 (GGGCN), 139 to 141 (GTG), E170, R174, and D217 each bind GTP.

It belongs to the FtsZ family. In terms of assembly, homodimer. Polymerizes to form a dynamic ring structure in a strictly GTP-dependent manner. Interacts directly with several other division proteins.

It localises to the cytoplasm. In terms of biological role, essential cell division protein that forms a contractile ring structure (Z ring) at the future cell division site. The regulation of the ring assembly controls the timing and the location of cell division. One of the functions of the FtsZ ring is to recruit other cell division proteins to the septum to produce a new cell wall between the dividing cells. Binds GTP and shows GTPase activity. This chain is Cell division protein FtsZ 1, found in Archaeoglobus fulgidus (strain ATCC 49558 / DSM 4304 / JCM 9628 / NBRC 100126 / VC-16).